The sequence spans 224 residues: MDQKRAVILLSGGLDSATVVAMAQAQGYSCYTMSFDYGQRHRAELNAAARVARDMGVVEHKVIGLNLNGIGGSALTDSSIDVPEAPSEGIPVTYVPARNTVFLSLALGWAEVLNARDIFIGVNAVDYSGYPDCRPEFVESFERMANLATKAGVEGQGFRILAPLQNLSKADIVKAGVGLGVDYSLTVSCYQADDDGRACGKCDSCRLRAEGFQAAGIADPTRYF.

10-20 (LSGGLDSATVV) provides a ligand contact to ATP. 4 residues coordinate Zn(2+): Cys189, Cys199, Cys202, and Cys205.

This sequence belongs to the QueC family. Zn(2+) is required as a cofactor.

It carries out the reaction 7-carboxy-7-deazaguanine + NH4(+) + ATP = 7-cyano-7-deazaguanine + ADP + phosphate + H2O + H(+). The protein operates within purine metabolism; 7-cyano-7-deazaguanine biosynthesis. Catalyzes the ATP-dependent conversion of 7-carboxy-7-deazaguanine (CDG) to 7-cyano-7-deazaguanine (preQ(0)). This chain is 7-cyano-7-deazaguanine synthase, found in Pseudomonas fluorescens (strain SBW25).